Here is a 434-residue protein sequence, read N- to C-terminus: Serine/threonine-protein kinase Sgk1-A (434 aa).

Positions 66 to 94 (PQEPELLNENSSPPPSPSQQINLGPSSNP) are disordered. The segment covering 84–94 (QQINLGPSSNP) has biased composition (polar residues). One can recognise a Protein kinase domain in the interval 101 to 358 (FQFLKIIGKG…FMEIKNHIFF (258 aa)). ATP is bound by residues 107–115 (IGKGSFGKV) and Lys-130. Residue Asp-225 is the Proton acceptor of the active site. An AGC-kinase C-terminal domain is found at 359–434 (SPINWDDLIN…SYAPPMESYL (76 aa)).

The protein belongs to the protein kinase superfamily. AGC Ser/Thr protein kinase family.

It is found in the cytoplasm. Its subcellular location is the nucleus. It localises to the endoplasmic reticulum. The catalysed reaction is L-seryl-[protein] + ATP = O-phospho-L-seryl-[protein] + ADP + H(+). The enzyme catalyses L-threonyl-[protein] + ATP = O-phospho-L-threonyl-[protein] + ADP + H(+). Functionally, protein kinase that may play an important role in cellular stress response. Plays an important role in activating certain potassium, sodium, and chloride channels, suggesting an involvement in the regulation of processes such as cell survival, neuronal excitability, and renal sodium excretion. This Xenopus laevis (African clawed frog) protein is Serine/threonine-protein kinase Sgk1-A (sgk1-a).